The following is a 977-amino-acid chain: Ubiquitin-like modifier-activating enzyme 7 (977 aa).

It belongs to the ubiquitin-activating E1 family. In terms of processing, ubiquitinated by RNF170.

It localises to the cytoplasm. The protein localises to the nucleus. It participates in protein modification; protein ubiquitination. In terms of biological role, E1-activating enzyme that catalyzes the covalent conjugation of the ubiquitin-like protein product of ISG15 to additional interferons stimulated proteins (ISGs) as well as other cellular proteins such as P53 in a process termed protein ISGylation. Plays an essential role in antiviral immunity together with ISG15 by restricting the replication of many viruses including rabies virus, influenza virus, sindbis virus or rotavirus. The chain is Ubiquitin-like modifier-activating enzyme 7 from Mus musculus (Mouse).